A 287-amino-acid chain; its full sequence is Glycine--tRNA ligase alpha subunit (287 aa).

The protein belongs to the class-II aminoacyl-tRNA synthetase family. Tetramer of two alpha and two beta subunits.

The protein localises to the cytoplasm. The enzyme catalyses tRNA(Gly) + glycine + ATP = glycyl-tRNA(Gly) + AMP + diphosphate. This chain is Glycine--tRNA ligase alpha subunit, found in Campylobacter jejuni (strain RM1221).